The chain runs to 279 residues: Undecaprenyl-diphosphatase (279 aa).

The next 8 helical transmembrane spans lie at 2–22 (LIIELLKAIFFGIIEGITEWL), 44–64 (AFIEMFNIVIQLGAIIAVMLI), 85–105 (WQLWLKVVIACIPSILIAVPL), 113–133 (FYFMVPIAIALIVYGIAFIWI), 163–183 (VLSIVPGTSRSGATILGAIIL), 188–208 (TVAADFTFFLAIPTMFGYSGL), 223–243 (AQVLILLVASLTAFVVSLLAI), and 255–275 (FTIFGKYRIVLGSLLLIYSFF).

It belongs to the UppP family.

The protein localises to the cell membrane. It catalyses the reaction di-trans,octa-cis-undecaprenyl diphosphate + H2O = di-trans,octa-cis-undecaprenyl phosphate + phosphate + H(+). Its function is as follows. Catalyzes the dephosphorylation of undecaprenyl diphosphate (UPP). Confers resistance to bacitracin. The chain is Undecaprenyl-diphosphatase from Streptococcus pyogenes serotype M2 (strain MGAS10270).